The chain runs to 429 residues: Enolase (429 aa).

Residue Gln-165 participates in (2R)-2-phosphoglycerate binding. The active-site Proton donor is Glu-207. Asp-244, Glu-287, and Asp-314 together coordinate Mg(2+). Residues Lys-339, Arg-368, Ser-369, and Lys-390 each contribute to the (2R)-2-phosphoglycerate site. Lys-339 (proton acceptor) is an active-site residue.

Belongs to the enolase family. It depends on Mg(2+) as a cofactor.

It localises to the cytoplasm. It is found in the secreted. The protein localises to the cell surface. It carries out the reaction (2R)-2-phosphoglycerate = phosphoenolpyruvate + H2O. Its pathway is carbohydrate degradation; glycolysis; pyruvate from D-glyceraldehyde 3-phosphate: step 4/5. In terms of biological role, catalyzes the reversible conversion of 2-phosphoglycerate (2-PG) into phosphoenolpyruvate (PEP). It is essential for the degradation of carbohydrates via glycolysis. The polypeptide is Enolase (Roseiflexus castenholzii (strain DSM 13941 / HLO8)).